We begin with the raw amino-acid sequence, 329 residues long: MQNSLLKPKAINVEQMGGNRAKVALEPFERGYGHTLGNALRRVLLASMPGYAATEVTIAGVLHEYSSIDGVQEDVVNILLNLKGVVFKLHNRDEVTLSLRKDGEGLVTASDIQTPHDVEIINPDHVIAHLSQGGKLDMQIKVEKGRGYVPGTMRRHGDEPTKSIGRIILDASFSPVKRVSYTVESARVEQRTDLDKLVVDIETNGAISAEDAVRASAKILVEQLAVFAQLEGSELAAFDTPSPRGSTQFDPILLRPVDELELTVRSANCLKAENIYYIGDLIQRTENELLKTPNLGRKSLNEIKEVLASRGLTLGMKLESWPPAALEKR.

The alpha N-terminal domain (alpha-NTD) stretch occupies residues 1–231 (MQNSLLKPKA…EQLAVFAQLE (231 aa)). The interval 249 to 329 (FDPILLRPVD…SWPPAALEKR (81 aa)) is alpha C-terminal domain (alpha-CTD).

The protein belongs to the RNA polymerase alpha chain family. In terms of assembly, homodimer. The RNAP catalytic core consists of 2 alpha, 1 beta, 1 beta' and 1 omega subunit. When a sigma factor is associated with the core the holoenzyme is formed, which can initiate transcription.

It catalyses the reaction RNA(n) + a ribonucleoside 5'-triphosphate = RNA(n+1) + diphosphate. DNA-dependent RNA polymerase catalyzes the transcription of DNA into RNA using the four ribonucleoside triphosphates as substrates. This chain is DNA-directed RNA polymerase subunit alpha, found in Albidiferax ferrireducens (strain ATCC BAA-621 / DSM 15236 / T118) (Rhodoferax ferrireducens).